The chain runs to 529 residues: FAD-binding monooxygenase BOA2 (529 aa).

FAD contacts are provided by residues 58–61 (VWWK), 70–71 (DI), and Tyr76. Residue 68–70 (ACD) coordinates NADP(+). Residues 198 to 204 (TGPSACQ) and 221 to 222 (RS) each bind NADP(+).

It belongs to the FAD-binding monooxygenase family. FAD is required as a cofactor.

Its pathway is polyketide biosynthesis. FAD-binding monooxygenase; part of the gene cluster A that mediates the biosynthesis of botcinic acid and its botcinin derivatives, acetate-derived polyketides that contribute to virulence when combined with the sesquiterpene botrydial. Botcinic acid and its derivatives have been shown to induce chlorosis and necrosis during host plant infection, but also have antifungal activities. Two polyketide synthases, BOA6 and BOA9, are involved in the biosynthesis of botcinins. BOA6 mediates the formation of the per-methylated tetraketide core by condensation of four units of malonyl-CoA with one unit of acetyl-CoA, which would be methylated in activated methylene groups to yield a bicyclic acid intermediate that could then either be converted to botrylactone derivatives or lose the starter acetate unit through a retro-Claisen type C-C bond cleavage to yield botcinin derivatives. The second polyketide synthase, BOA9, is probably required for the biosynthesis of the tetraketide side chain of botcinins. The methyltransferase (MT) domain within BOA6 is probably responsible for the incorporation of four methyl groups. The trans-enoyl reductase BOA5 might take over the enoyl reductase function of BOA6 that misses an ER domain. The monooxygenases BOA2, BOA3 and BOA4 might be involved in further hydroxylations at C4, C5 and C8, whereas BOA7, close to BOA9, could potentially be involved in the hydroxylation at C4 in the side chain of botcinins. The protein is FAD-binding monooxygenase BOA2 of Botryotinia fuckeliana (strain B05.10) (Noble rot fungus).